Consider the following 330-residue polypeptide: MGEYLTLPMEVYSGILVTHEGVFHGDLIVEEMAFEESRVEKDDFVISPTFFNAHTHLGDAALREAPRLDLVSIVGPGGYKHRMLSQIDSKTLRQEVELEVRISRDAGTSHFLDFREGGKAGLEIVKGIDGVLPLARPTSVEEAEEVEAFGFAYSSARDHDLKLMEEVREIARRRKMLFAIHAGEKDCADVDAALALEPDFVVHMNSCPEKIREFVEAEIPIVSCIRSNAFFGLLNKKSYELLSEYEKWMLGTDNAMISTASMLDEMHFAAYLIGKEKAILRAATASYAVFGFRHGYVVFNRNCSFRRTSDPLLTLVRRAGVKDIERVLIL.

The Zn(2+) site is built by His54, His56, His181, and Asp253.

This sequence belongs to the metallo-dependent hydrolases superfamily. ATZ/TRZ family.

This Archaeoglobus fulgidus (strain ATCC 49558 / DSM 4304 / JCM 9628 / NBRC 100126 / VC-16) protein is Putative aminohydrolase AF_1775.